A 448-amino-acid polypeptide reads, in one-letter code: MCDSKDNSGVSEKCGKKFTNYPLNTTPTSLNYNLPEISKKFYNLKNKYSRNGYGLSKTEFPSSIENCPAKEYSIMYDNKDPRFLIRFLLDDGRYIIADRDDGEVFDEAPIYLDNNNHPIISRHYTGEERQKFEQVGSGDYITGEQFFQFYTQNKTRVLSNCRALDSRTILLSTAKIFPIYPPASETQLTAFVNSSFYAAAIPQLPQTSLLENIPEPTSLDDSGVLPKDAVRAVKGSALLPCIIVHDPNLNNSDKMKFNTYYLLEYKEYWHQLWSQIIPAHQTVKIQERTGISEVVQNSMIEDLNMYIGADFGMHFYLRSSGFKEQITRGLNRPLSQTTTQLGERVEEMEYYNSNDLDVRYVKYALAREFTLKRVNGEIVKNWVAVDYRLAGIQSYPNAPITNPLTLTKHTIIRCENSYDGHIFKTPLIFKNGEVIVKTNEELIPKINQ.

The interval 1–198 (MCDSKDNSGV…TAFVNSSFYA (198 aa)) is beta-trefoil domain. A disulfide bridge connects residues Cys-67 and Cys-161. The tract at residues 199-448 (AAIPQLPQTS…NEELIPKINQ (250 aa)) is probable pore-forming domain.

The protein belongs to the toxin_10 family. In terms of assembly, forms a heterodimer with BinA. Post-translationally, processed by proteases extracted from mosquito larval gut.

It is found in the spore. The protein resides in the perispore. Component of a binary toxin active against Culex and some Aedes mosquito larvae; mortality towards both C.quinquefasciatus and A.atropalpus is maximal by 48 hours. A.aegypti is not very susceptible to this toxin. This subunit is responsible for localized binding to specific regions of the host larval gut. Binary toxin internalization into host gut cells requires both proteins. The chain is Binary larvicide subunit BinB (binB) from Lysinibacillus sphaericus (Bacillus sphaericus).